Here is a 377-residue protein sequence, read N- to C-terminus: Probable staphylococcal-like nuclease CAN3 (377 aa).

Gly2 is lipidated: N-myristoyl glycine. Cys7 carries the S-palmitoyl cysteine lipid modification. The tract at residues 15–57 is disordered; sequence GDHYPYYKPTSRPHYQPPHYHGQPAAPPAPPQQQPLGPHGVTP. A compositionally biased stretch (low complexity) spans 27–38; it reads PHYQPPHYHGQP. Positions 177–353 constitute a TNase-like domain; it reads NTLPVYDKCI…KAANRGLWAS (177 aa). Position 190 (Asp190) interacts with Ca(2+). Arg260 is an active-site residue. Asp265 is a Ca(2+) binding site. Active-site residues include Glu268 and Arg302.

The protein belongs to the thermonuclease family. The cofactor is Ca(2+).

The protein localises to the cell membrane. Its function is as follows. Enzyme that catalyzes the hydrolysis of both DNA and RNA at the 5' position of the phosphodiester bond. This chain is Probable staphylococcal-like nuclease CAN3, found in Oryza sativa subsp. japonica (Rice).